A 326-amino-acid chain; its full sequence is Aspartate carbamoyltransferase catalytic subunit (326 aa).

R60 and T61 together coordinate carbamoyl phosphate. K88 is an L-aspartate binding site. Carbamoyl phosphate contacts are provided by R110, H143, and Q146. 2 residues coordinate L-aspartate: R183 and R239. Carbamoyl phosphate is bound by residues G280 and P281.

This sequence belongs to the aspartate/ornithine carbamoyltransferase superfamily. ATCase family. As to quaternary structure, heterododecamer (2C3:3R2) of six catalytic PyrB chains organized as two trimers (C3), and six regulatory PyrI chains organized as three dimers (R2).

It carries out the reaction carbamoyl phosphate + L-aspartate = N-carbamoyl-L-aspartate + phosphate + H(+). It functions in the pathway pyrimidine metabolism; UMP biosynthesis via de novo pathway; (S)-dihydroorotate from bicarbonate: step 2/3. Catalyzes the condensation of carbamoyl phosphate and aspartate to form carbamoyl aspartate and inorganic phosphate, the committed step in the de novo pyrimidine nucleotide biosynthesis pathway. The polypeptide is Aspartate carbamoyltransferase catalytic subunit (Microcystis aeruginosa (strain NIES-843 / IAM M-2473)).